A 525-amino-acid polypeptide reads, in one-letter code: GMP synthase [glutamine-hydrolyzing] (525 aa).

In terms of domain architecture, Glutamine amidotransferase type-1 spans 8 to 207; the sequence is KILILDFGSQ…ALDICGCAAN (200 aa). C85 acts as the Nucleophile in catalysis. Active-site residues include H181 and E183. The region spanning 208–400 is the GMPS ATP-PPase domain; sequence WKPSSIIEDA…LGLPYNMLYR (193 aa). 235-241 lines the ATP pocket; that stretch reads SGGVDSS.

Homodimer.

It carries out the reaction XMP + L-glutamine + ATP + H2O = GMP + L-glutamate + AMP + diphosphate + 2 H(+). The protein operates within purine metabolism; GMP biosynthesis; GMP from XMP (L-Gln route): step 1/1. Catalyzes the synthesis of GMP from XMP. The chain is GMP synthase [glutamine-hydrolyzing] from Shewanella oneidensis (strain ATCC 700550 / JCM 31522 / CIP 106686 / LMG 19005 / NCIMB 14063 / MR-1).